The chain runs to 164 residues: 3-isopropylmalate dehydratase small subunit 2 (164 aa).

Belongs to the LeuD family. LeuD type 2 subfamily. In terms of assembly, heterodimer of LeuC and LeuD.

It catalyses the reaction (2R,3S)-3-isopropylmalate = (2S)-2-isopropylmalate. Its pathway is amino-acid biosynthesis; L-leucine biosynthesis; L-leucine from 3-methyl-2-oxobutanoate: step 2/4. Catalyzes the isomerization between 2-isopropylmalate and 3-isopropylmalate, via the formation of 2-isopropylmaleate. The sequence is that of 3-isopropylmalate dehydratase small subunit 2 (leuD2) from Pyrococcus furiosus (strain ATCC 43587 / DSM 3638 / JCM 8422 / Vc1).